The sequence spans 418 residues: Gamma-glutamyl phosphate reductase (418 aa).

It belongs to the gamma-glutamyl phosphate reductase family.

It localises to the cytoplasm. It catalyses the reaction L-glutamate 5-semialdehyde + phosphate + NADP(+) = L-glutamyl 5-phosphate + NADPH + H(+). The protein operates within amino-acid biosynthesis; L-proline biosynthesis; L-glutamate 5-semialdehyde from L-glutamate: step 2/2. Its function is as follows. Catalyzes the NADPH-dependent reduction of L-glutamate 5-phosphate into L-glutamate 5-semialdehyde and phosphate. The product spontaneously undergoes cyclization to form 1-pyrroline-5-carboxylate. In Citrifermentans bemidjiense (strain ATCC BAA-1014 / DSM 16622 / JCM 12645 / Bem) (Geobacter bemidjiensis), this protein is Gamma-glutamyl phosphate reductase.